The chain runs to 325 residues: Succinylglutamate desuccinylase (325 aa).

Zn(2+) is bound by residues His-51, Glu-54, and His-148. Residue Glu-211 is part of the active site.

The protein belongs to the AspA/AstE family. Succinylglutamate desuccinylase subfamily. The cofactor is Zn(2+).

It carries out the reaction N-succinyl-L-glutamate + H2O = L-glutamate + succinate. Its pathway is amino-acid degradation; L-arginine degradation via AST pathway; L-glutamate and succinate from L-arginine: step 5/5. Functionally, transforms N(2)-succinylglutamate into succinate and glutamate. The sequence is that of Succinylglutamate desuccinylase from Photorhabdus laumondii subsp. laumondii (strain DSM 15139 / CIP 105565 / TT01) (Photorhabdus luminescens subsp. laumondii).